A 230-amino-acid polypeptide reads, in one-letter code: NADH-quinone oxidoreductase subunit 9 (230 aa).

4Fe-4S ferredoxin-type domains lie at 60-93 (GRPV…MQAK) and 104-133 (AWFE…MSKE). Residues Cys73, Cys76, Cys79, Cys83, Cys113, Cys116, Cys119, and Cys123 each contribute to the [4Fe-4S] cluster site.

Belongs to the complex I 23 kDa subunit family. NDH-1 is composed of 14 different subunits. Subunits Nqo7-14 constitute the membrane sector of the complex. Requires [4Fe-4S] cluster as cofactor.

The protein localises to the cell inner membrane. It catalyses the reaction a quinone + NADH + 5 H(+)(in) = a quinol + NAD(+) + 4 H(+)(out). NDH-1 shuttles electrons from NADH, via FMN and iron-sulfur (Fe-S) centers, to quinones in the respiratory chain. The immediate electron acceptor for the enzyme in this species is believed to be menaquinone. Couples the redox reaction to proton translocation (for every two electrons transferred, four hydrogen ions are translocated across the cytoplasmic membrane), and thus conserves the redox energy in a proton gradient. This Rhodothermus marinus (Rhodothermus obamensis) protein is NADH-quinone oxidoreductase subunit 9 (nqo9).